Reading from the N-terminus, the 635-residue chain is MNSQDLKKRQEKIRNFSIIAHIDHGKSTLADRILEKTETVSSREMQAQLLDSMDLERERGITIKLNAIELNYTAKDGETYIFHLIDTPGHVDFTYEVSRSLAACEGAILVVDAAQGIEAQTLANVYLALDNDLEILPVINKIDLPAADPERVRHEVEDVIGLDASEAVLASAKAGIGIEEILEQIVEKVPAPTGDVDAPLQALIFDSVYDAYRGVILQVRIVNGIVKPGDKIQMMSNGKTFDVTEVGIFTPKAVGRDFLATGDVGYVAASIKTVADTRVGDTVTLANNPAKEALHGYKQMNPMVFAGIYPIESNKYNDLREALEKLQLNDASLQFEPETSQALGFGFRCGFLGLLHMDVIQERLEREFNIDLIMTAPSVVYHVHTTDEDMIEVSNPSEFPDPTRVAFIEEPYVKAQIMVPQEFVGAVMELSQRKRGDFVTMDYIDDNRVNVIYQIPLAEIVFDFFDKLKSSTRGYASFDYDMSEYRRSQLVKMDILLNGDKVDALSFIVHKEFAYERGKIIVEKLKKIIPRQQFEVPIQAAIGQKIVARSDIKALRKNVLAKCYGGDVSRKRKLLEKQKAGKKRMKAIGSVEVPQEAFLSVLSMDDRCQEITKPNRLVFRGELLWAYMTKKLIIS.

The tr-type G domain maps to 11 to 193 (EKIRNFSIIA…QIVEKVPAPT (183 aa)). Residues 23–28 (DHGKST) and 140–143 (NKID) each bind GTP.

This sequence belongs to the TRAFAC class translation factor GTPase superfamily. Classic translation factor GTPase family. LepA subfamily.

The protein resides in the cell membrane. It carries out the reaction GTP + H2O = GDP + phosphate + H(+). Required for accurate and efficient protein synthesis under certain stress conditions. May act as a fidelity factor of the translation reaction, by catalyzing a one-codon backward translocation of tRNAs on improperly translocated ribosomes. Back-translocation proceeds from a post-translocation (POST) complex to a pre-translocation (PRE) complex, thus giving elongation factor G a second chance to translocate the tRNAs correctly. Binds to ribosomes in a GTP-dependent manner. The protein is Elongation factor 4 of Streptococcus pyogenes serotype M12 (strain MGAS2096).